The sequence spans 601 residues: Tripeptidyl-peptidase SED4 (601 aa).

The first 22 residues, 1–22 (MVSFTLRAIGACLVSLPALVTA), serve as a signal peptide directing secretion. The propeptide at 23 to 202 (APTSHISGDF…SVFTSDLEIT (180 aa)) is removed in mature form. 2 N-linked (GlcNAc...) asparagine glycosylation sites follow: Asn210 and Asn281. The Peptidase S53 domain occupies 212-601 (TITPDCIRDL…ETLSKLVLQY (390 aa)). Active-site charge relay system residues include Glu288 and Asp292. Asn323 carries N-linked (GlcNAc...) asparagine glycosylation. The active-site Charge relay system is Ser504. Positions 546 and 547 each coordinate Ca(2+). The N-linked (GlcNAc...) asparagine glycan is linked to Asn575. Positions 579 and 581 each coordinate Ca(2+).

The cofactor is Ca(2+).

The protein resides in the secreted. Its subcellular location is the extracellular space. The enzyme catalyses Release of an N-terminal tripeptide from a polypeptide.. Functionally, secreted tripeptidyl-peptidase which degrades proteins at acidic pHs and is involved in virulence. The chain is Tripeptidyl-peptidase SED4 (SED4) from Arthroderma otae (strain ATCC MYA-4605 / CBS 113480) (Microsporum canis).